A 458-amino-acid polypeptide reads, in one-letter code: ATP synthase subunit beta (458 aa).

ATP is bound at residue G148 to T155.

This sequence belongs to the ATPase alpha/beta chains family. In terms of assembly, F-type ATPases have 2 components, CF(1) - the catalytic core - and CF(0) - the membrane proton channel. CF(1) has five subunits: alpha(3), beta(3), gamma(1), delta(1), epsilon(1). CF(0) has three main subunits: a(1), b(2) and c(9-12). The alpha and beta chains form an alternating ring which encloses part of the gamma chain. CF(1) is attached to CF(0) by a central stalk formed by the gamma and epsilon chains, while a peripheral stalk is formed by the delta and b chains.

It localises to the cell inner membrane. It catalyses the reaction ATP + H2O + 4 H(+)(in) = ADP + phosphate + 5 H(+)(out). Produces ATP from ADP in the presence of a proton gradient across the membrane. The catalytic sites are hosted primarily by the beta subunits. The protein is ATP synthase subunit beta of Pseudomonas putida (strain ATCC 700007 / DSM 6899 / JCM 31910 / BCRC 17059 / LMG 24140 / F1).